The primary structure comprises 162 residues: Caveolin-2 (162 aa).

At 1–86 (MGLETEKTDV…FEISKYVMYK (86 aa)) the chain is on the cytoplasmic side. Residue Y19 is modified to Phosphotyrosine; by SRC. Phosphoserine is present on residues S20 and S23. Position 27 is a phosphotyrosine; by SRC (Y27). S36 is modified (phosphoserine). Residues 87–107 (FLTVFLAIPLAFLAGILFATL) constitute an intramembrane region (helical). Over 108–162 (SCLHIWIIMPFVKTCLMVLPSVQTIWKSVTDAIVAPLCTSIGRSFSSVSLQLSQD) the chain is Cytoplasmic.

It belongs to the caveolin family. As to quaternary structure, monomer or homodimer. Interacts with CAV1; the interaction forms a stable heterooligomeric complex that is required for targeting to lipid rafts and for caveolae formation. Tyrosine phosphorylated forms do not form heterooligomers with the Tyr-19-phosphorylated form existing as a monomer or dimer, and the Tyr-27-form as a monomer only. Interacts (tyrosine phosphorylated form) with the SH2 domain-containing proteins, RASA1, NCK1 and SRC. Interacts (tyrosine phosphorylated form) with INSR, the interaction (Tyr-27-phosphorylated form) is increased on insulin stimulation. Interacts (Tyr-19 phosphorylated form) with MAPK1 (phosphorylated form); the interaction, promoted by insulin, leads to nuclear location and MAPK1 activation. Interacts with STAT3; the interaction is increased on insulin-induced tyrosine phosphorylation leading to STAT activation. Post-translationally, phosphorylated on serine and tyrosine residues. CAV1 promotes phosphorylation on Ser-23 which then targets the complex to the plasma membrane, lipid rafts and caveolae. Phosphorylation on Ser-36 appears to modulate mitosis in endothelial cells. Phosphorylation on both Tyr-19 and Tyr-27 is required for insulin-induced 'Ser-727' phosphorylation of STAT3 and its activation. Phosphorylation on Tyr-19 is required for insulin-induced phosphorylation of MAPK1 and DNA binding of STAT3. Tyrosine phosphorylation is induced by both EGF and insulin (By. similarity).

Its subcellular location is the nucleus. It localises to the cytoplasm. It is found in the golgi apparatus membrane. The protein resides in the cell membrane. The protein localises to the membrane. Its subcellular location is the caveola. Its function is as follows. May act as a scaffolding protein within caveolar membranes. Interacts directly with G-protein alpha subunits and can functionally regulate their activity. Acts as an accessory protein in conjunction with CAV1 in targeting to lipid rafts and driving caveolae formation. The Ser-36 phosphorylated form has a role in modulating mitosis in endothelial cells. Positive regulator of cellular mitogenesis of the MAPK signaling pathway. Required for the insulin-stimulated nuclear translocation and activation of MAPK1 and STAT3, and the subsequent regulation of cell cycle progression. The sequence is that of Caveolin-2 (CAV2) from Aotus nancymaae (Ma's night monkey).